The sequence spans 710 residues: Bifunctional lysine-specific demethylase and histidyl-hydroxylase NO66 (710 aa).

The disordered stretch occupies residues 103–137 (TDEMNKTKKKQKKIMKKEIRKRTKRKRKSVNKREL). A compositionally biased stretch (basic residues) spans 109–132 (TKKKQKKIMKKEIRKRTKRKRKSV). The JmjC domain occupies 359–506 (CSIQLTNPQS…DLLERVIPPA (148 aa)). Residues His-405, Asp-407, and His-472 each coordinate Fe cation.

It belongs to the ROX family. NO66 subfamily. Fe(2+) is required as a cofactor.

The protein resides in the nucleus. It carries out the reaction N(6),N(6)-dimethyl-L-lysyl(36)-[histone H3] + 2 2-oxoglutarate + 2 O2 = L-lysyl(36)-[histone H3] + 2 formaldehyde + 2 succinate + 2 CO2. Its function is as follows. Oxygenase that can act as both a histone lysine demethylase and a ribosomal histidine hydroxylase. Specifically demethylates 'Lys-4' (H3K4me) and 'Lys-36' (H3K36me) of histone H3, thereby playing a central role in histone code. This Brugia malayi (Filarial nematode worm) protein is Bifunctional lysine-specific demethylase and histidyl-hydroxylase NO66.